The primary structure comprises 275 residues: Glucosamine-6-phosphate deaminase 2 (275 aa).

The active-site Proton acceptor; for enolization step is the aspartate 72. A coiled-coil region spans residues 103–131 (NAHILDGNASDLQAECEDFERKIKEAGGI). The For ring-opening step role is filled by aspartate 141. Histidine 143 functions as the Proton acceptor; for ring-opening step in the catalytic mechanism. The For ring-opening step role is filled by glutamate 148.

Belongs to the glucosamine/galactosamine-6-phosphate isomerase family. As to quaternary structure, homohexamer.

Its subcellular location is the cytoplasm. It carries out the reaction alpha-D-glucosamine 6-phosphate + H2O = beta-D-fructose 6-phosphate + NH4(+). Catalyzes the reversible conversion of alpha-D-glucosamine 6-phosphate (GlcN-6P) into beta-D-fructose 6-phosphate (Fru-6P) and ammonium ion, a regulatory reaction step in de novo uridine diphosphate-N-acetyl-alpha-D-glucosamine (UDP-GlcNAc) biosynthesis via hexosamine pathway. The chain is Glucosamine-6-phosphate deaminase 2 from Xenopus tropicalis (Western clawed frog).